The chain runs to 227 residues: 2-C-methyl-D-erythritol 4-phosphate cytidylyltransferase (227 aa).

The protein belongs to the IspD/TarI cytidylyltransferase family. IspD subfamily.

The catalysed reaction is 2-C-methyl-D-erythritol 4-phosphate + CTP + H(+) = 4-CDP-2-C-methyl-D-erythritol + diphosphate. It participates in isoprenoid biosynthesis; isopentenyl diphosphate biosynthesis via DXP pathway; isopentenyl diphosphate from 1-deoxy-D-xylulose 5-phosphate: step 2/6. Functionally, catalyzes the formation of 4-diphosphocytidyl-2-C-methyl-D-erythritol from CTP and 2-C-methyl-D-erythritol 4-phosphate (MEP). The chain is 2-C-methyl-D-erythritol 4-phosphate cytidylyltransferase from Thermosipho melanesiensis (strain DSM 12029 / CIP 104789 / BI429).